Consider the following 45-residue polypeptide: uncharacterized protein (45 aa).

The N-terminal stretch at 1-19 (MTFQILFLFVFHFVYIFRA) is a signal peptide.

This is an uncharacterized protein from Saccharomyces cerevisiae (strain ATCC 204508 / S288c) (Baker's yeast).